We begin with the raw amino-acid sequence, 150 residues long: UPF0178 protein BamMC406_1579 (150 aa).

This sequence belongs to the UPF0178 family.

The protein is UPF0178 protein BamMC406_1579 of Burkholderia ambifaria (strain MC40-6).